Here is a 438-residue protein sequence, read N- to C-terminus: Trigger factor (438 aa).

The PPIase FKBP-type domain occupies 162–247; the sequence is GDIVTIDFEG…VKDIKVKELP (86 aa).

Belongs to the FKBP-type PPIase family. Tig subfamily.

Its subcellular location is the cytoplasm. The enzyme catalyses [protein]-peptidylproline (omega=180) = [protein]-peptidylproline (omega=0). Involved in protein export. Acts as a chaperone by maintaining the newly synthesized protein in an open conformation. Functions as a peptidyl-prolyl cis-trans isomerase. This Caldicellulosiruptor bescii (strain ATCC BAA-1888 / DSM 6725 / KCTC 15123 / Z-1320) (Anaerocellum thermophilum) protein is Trigger factor.